Consider the following 36-residue polypeptide: Dolichyl-diphosphooligosaccharide--protein glycosyltransferase subunit OST4 (36 aa).

At 1–9 (MISDEQLNS) the chain is on the lumenal side. A helical transmembrane segment spans residues 10–28 (LAITFGIVMMTLIVIYHAV). At 29-36 (DSTMSPKN) the chain is on the cytoplasmic side.

It belongs to the OST4 family. As to quaternary structure, component of the oligosaccharyltransferase (OST) complex, which appears to exist in two assemblies comprising OST1, OST2, OST4, OST5, STT3, SWP1, WPB1, and either OST3 or OST6. OST assembly occurs through the formation of 3 subcomplexes. Subcomplex 1 contains OST1 and OST5, subcomplex 2 contains STT3, OST3, and OST4, and subcomplex 3 contains OST2, WBP1, and SWP1. Interacts with SEC61, SBH1 and SSS1.

The protein resides in the endoplasmic reticulum membrane. It functions in the pathway protein modification; protein glycosylation. Subunit of the oligosaccharyl transferase (OST) complex that catalyzes the initial transfer of a defined glycan (Glc(3)Man(9)GlcNAc(2) in eukaryotes) from the lipid carrier dolichol-pyrophosphate to an asparagine residue within an Asn-X-Ser/Thr consensus motif in nascent polypeptide chains, the first step in protein N-glycosylation. N-glycosylation occurs cotranslationally and the complex associates with the Sec61 complex at the channel-forming translocon complex that mediates protein translocation across the endoplasmic reticulum (ER). All subunits are required for a maximal enzyme activity. In Saccharomyces cerevisiae (strain ATCC 204508 / S288c) (Baker's yeast), this protein is Dolichyl-diphosphooligosaccharide--protein glycosyltransferase subunit OST4 (OST4).